The primary structure comprises 299 residues: Nucleotide-binding protein DIP1313 (299 aa).

22–29 serves as a coordination point for ATP; it reads GLSGAGLS. 73-76 is a binding site for GTP; that stretch reads DVRS.

Belongs to the RapZ-like family.

In terms of biological role, displays ATPase and GTPase activities. The sequence is that of Nucleotide-binding protein DIP1313 from Corynebacterium diphtheriae (strain ATCC 700971 / NCTC 13129 / Biotype gravis).